We begin with the raw amino-acid sequence, 553 residues long: ATP synthase F(1) complex subunit alpha, mitochondrial (553 aa).

A mitochondrion-targeting transit peptide spans 1–43 (MLSVRVAAAVARALPRRAGLVSKNALGSSFVGARNLHASNTRL). Serine 53 and serine 65 each carry phosphoserine. At serine 76 the chain carries Phosphoserine; alternate. The O-linked (GlcNAc) serine; alternate glycan is linked to serine 76. Position 106 is a phosphoserine (serine 106). 3 positions are modified to N6-acetyllysine: lysine 123, lysine 126, and lysine 132. The residue at position 134 (threonine 134) is a Phosphothreonine. Lysine 161 bears the N6-acetyllysine; alternate mark. N6-succinyllysine; alternate is present on lysine 161. Phosphoserine is present on serine 166. At lysine 167 the chain carries N6-acetyllysine; alternate. Lysine 167 is subject to N6-succinyllysine; alternate. Serine 184 bears the Phosphoserine mark. Arginine 204 is subject to Omega-N-methylarginine. ATP contacts are provided by glutamine 215, glycine 217, lysine 218, threonine 219, and serine 220. Threonine 219 provides a ligand contact to Mg(2+). An N6-acetyllysine; alternate mark is found at lysine 230 and lysine 239. N6-succinyllysine; alternate is present on residues lysine 230 and lysine 239. Residue lysine 240 is modified to N6-acetyllysine. An N6-acetyllysine; alternate mark is found at lysine 261 and lysine 305. An N6-succinyllysine; alternate mark is found at lysine 261 and lysine 305. Aspartate 312 contacts Mg(2+). Lysine 427 is subject to N6-acetyllysine; alternate. Lysine 427 carries the N6-succinyllysine; alternate modification. An N6-acetyllysine modification is found at lysine 434. Glutamine 473 and glutamine 475 together coordinate ATP. Residues lysine 498 and lysine 506 each carry the N6-acetyllysine; alternate modification. An N6-succinyllysine; alternate mark is found at lysine 498 and lysine 506. A Phosphoserine modification is found at serine 521. 2 positions are modified to N6-acetyllysine; alternate: lysine 531 and lysine 539. An N6-succinyllysine; alternate mark is found at lysine 531 and lysine 539. Lysine 541 is modified (N6-acetyllysine).

It belongs to the ATPase alpha/beta chains family. As to quaternary structure, homotrimer. Component of the ATP synthase complex composed at least of ATP5F1A/subunit alpha, ATP5F1B/subunit beta, ATP5MC1/subunit c (homooctomer), MT-ATP6/subunit a, MT-ATP8/subunit 8, ATP5ME/subunit e, ATP5MF/subunit f, ATP5MG/subunit g, ATP5MK/subunit k, ATP5MJ/subunit j, ATP5F1C/subunit gamma, ATP5F1D/subunit delta, ATP5F1E/subunit epsilon, ATP5PF/subunit F6, ATP5PB/subunit b, ATP5PD/subunit d, ATP5PO/subunit OSCP. ATP synthase complex consists of a soluble F(1) head domain (subunits alpha(3) and beta(3)) - the catalytic core - and a membrane F(0) domain - the membrane proton channel (subunits c, a, 8, e, f, g, k and j). These two domains are linked by a central stalk (subunits gamma, delta, and epsilon) rotating inside the F1 region and a stationary peripheral stalk (subunits F6, b, d, and OSCP). Interacts with ATPAF2. Interacts with HRG; the interaction occurs on the surface of T-cells and alters the cell morphology when associated with concanavalin (in vitro). Interacts with PLG (angiostatin peptide); the interaction inhibits most of the angiogenic properties of angiostatin. Interacts with BLOC1S1. Interacts with BCL2L1 isoform BCL-X(L); the interaction mediates the association of BCL2L1 isoform BCL-X(L) with the mitochondrial membrane F(1)F(0) ATP synthase and enhances neurons metabolic efficiency. Interacts with CLN5 and PPT1. Interacts with S100A1; this interaction increases F1-ATPase activity. Interacts with ABCB7; this interaction allows the regulation of cellular iron homeostasis and cellular reactive oxygen species (ROS) levels in cardiomyocytes. Post-translationally, acetylated on lysine residues. BLOC1S1 is required for acetylation. Acetylation of Lys-132, Lys-230 and Lys-498 is observed in liver mitochondria from fasted mice but not from fed mice.

Its subcellular location is the mitochondrion inner membrane. The protein resides in the cell membrane. Functionally, subunit alpha, of the mitochondrial membrane ATP synthase complex (F(1)F(0) ATP synthase or Complex V) that produces ATP from ADP in the presence of a proton gradient across the membrane which is generated by electron transport complexes of the respiratory chain. ATP synthase complex consist of a soluble F(1) head domain - the catalytic core - and a membrane F(1) domain - the membrane proton channel. These two domains are linked by a central stalk rotating inside the F(1) region and a stationary peripheral stalk. During catalysis, ATP synthesis in the catalytic domain of F(1) is coupled via a rotary mechanism of the central stalk subunits to proton translocation. In vivo, can only synthesize ATP although its ATP hydrolase activity can be activated artificially in vitro. With the catalytic subunit beta (ATP5F1B), forms the catalytic core in the F(1) domain. Subunit alpha does not bear the catalytic high-affinity ATP-binding sites. This is ATP synthase F(1) complex subunit alpha, mitochondrial from Mus musculus (Mouse).